The primary structure comprises 171 residues: MSDHKKAILAGGCFWGMQDLIRKQPGVVSTRVGYTGGQNDHPTYRNHPGHAESIEITYDPAQTDYRALLEFFFQIHDPTTKNRQGNDVGTSYRSAIFYVDDEQKRVALDTIADVDASGLWPGKVVTEVTPAGEFWEAEPEHQDYLERMPWGYTCHFPRPDWKLPKRADAKA.

Cys13 is a catalytic residue.

Belongs to the MsrA Met sulfoxide reductase family.

It catalyses the reaction L-methionyl-[protein] + [thioredoxin]-disulfide + H2O = L-methionyl-(S)-S-oxide-[protein] + [thioredoxin]-dithiol. The catalysed reaction is [thioredoxin]-disulfide + L-methionine + H2O = L-methionine (S)-S-oxide + [thioredoxin]-dithiol. Functionally, has an important function as a repair enzyme for proteins that have been inactivated by oxidation. Catalyzes the reversible oxidation-reduction of methionine sulfoxide in proteins to methionine. This chain is Peptide methionine sulfoxide reductase MsrA, found in Mycobacterium sp. (strain MCS).